Consider the following 351-residue polypeptide: Probable E3 ubiquitin-protein ligase sinah (351 aa).

Residues 1–38 (MSVRNSRPQLSWPERVSPQRTIDTPTASGEMLTRRQSA) are disordered. Over residues 18-27 (PQRTIDTPTA) the composition is skewed to polar residues. The RING-type zinc finger occupies 106-141 (CPVCFGYIMPPIMQCPRGHLICSTCRSKLTICPVCR). The tract at residues 155–346 (VASKLIFPCK…LALNVVIRKV (192 aa)) is SBD. An SIAH-type zinc finger spans residues 158 to 218 (KLIFPCKHSH…VYQHLMSSHE (61 aa)). 8 residues coordinate Zn(2+): C163, C170, H182, C186, C193, C200, H212, and H217.

Belongs to the SINA (Seven in absentia) family. As to quaternary structure, interacts with ebi and phyl.

It carries out the reaction S-ubiquitinyl-[E2 ubiquitin-conjugating enzyme]-L-cysteine + [acceptor protein]-L-lysine = [E2 ubiquitin-conjugating enzyme]-L-cysteine + N(6)-ubiquitinyl-[acceptor protein]-L-lysine.. It participates in protein modification; protein ubiquitination. E3 ubiquitin-protein ligase that mediates ubiquitination and subsequent proteasomal degradation of target proteins. The adapter phyl is required to direct the degradation of the two isoforms of the transcriptional repressor Tramtrack (Ttk). E3 ubiquitin ligases accept ubiquitin from an E2 ubiquitin-conjugating enzyme in the form of a thioester and then directly transfers the ubiquitin to targeted substrates. It probably triggers the ubiquitin-mediated degradation of different substrates. A phyl-independent mechanism of degradation exists for isoform beta of ttk that involves motifs in the C-terminus of ttk. This is Probable E3 ubiquitin-protein ligase sinah (sinah) from Drosophila melanogaster (Fruit fly).